The chain runs to 697 residues: Colicin-D (697 aa).

Residues 17 to 24 carry the TonB box motif; that stretch reads HSMVVWPS.

Belongs to the cloacin colicin family.

In terms of biological role, colicins are polypeptide toxins produced by and active against E.coli and closely related bacteria. Its function is as follows. Colicin D inhibits protein synthesis. This chain is Colicin-D (cda), found in Escherichia coli.